The chain runs to 338 residues: Histidinol-phosphate aminotransferase (338 aa).

Lys-204 is modified (N6-(pyridoxal phosphate)lysine).

The protein belongs to the class-II pyridoxal-phosphate-dependent aminotransferase family. Histidinol-phosphate aminotransferase subfamily. Requires pyridoxal 5'-phosphate as cofactor.

It catalyses the reaction L-histidinol phosphate + 2-oxoglutarate = 3-(imidazol-4-yl)-2-oxopropyl phosphate + L-glutamate. Its pathway is amino-acid biosynthesis; L-histidine biosynthesis; L-histidine from 5-phospho-alpha-D-ribose 1-diphosphate: step 7/9. The sequence is that of Histidinol-phosphate aminotransferase from Pyrococcus furiosus (strain ATCC 43587 / DSM 3638 / JCM 8422 / Vc1).